Reading from the N-terminus, the 312-residue chain is Olfactory receptor 7D2 (312 aa).

The Extracellular segment spans residues 1-25 (MEAGNQTGFLEFILLGLSEDPELQP). The N-linked (GlcNAc...) asparagine glycan is linked to asparagine 5. Residues 26–46 (FIFGLFLSMYLVTVLGNLLII) traverse the membrane as a helical segment. At 47–54 (LAISSDSH) the chain is on the cytoplasmic side. The chain crosses the membrane as a helical span at residues 55 to 75 (LHTPMYFFLSNLSWVDICFST). At 76 to 99 (CIVPKMLVNIQTENKAISYMDCLT) the chain is on the extracellular side. A disulfide bridge connects residues cysteine 97 and cysteine 189. A helical membrane pass occupies residues 100-120 (QVYFSMFFPILDTLLLTVMAY). Over 121 to 139 (DRFVAVCHPLHYMIIMNPH) the chain is Cytoplasmic. A helical transmembrane segment spans residues 140-160 (LCGLLVFVTWLIGVMTSLLHI). At 161 to 197 (SLMMHLIFCKDFEIPHFFCELTYILQLACSDTFLNST) the chain is on the extracellular side. Residues 198–217 (LIYFMTGVLGVFPLLGIIFS) form a helical membrane-spanning segment. The Cytoplasmic segment spans residues 218-237 (YSRIASSIRKMSSSGGKQKA). A helical membrane pass occupies residues 238–258 (LSTCGSHLSVVSLFYGTGIGV). The Extracellular portion of the chain corresponds to 259-271 (HFTSAVTHSSQKI). A helical membrane pass occupies residues 272–292 (SVASVMYTVVTPMLNPFIYSL). Residues 293–312 (RNKDVKGALGSLLSRAASCL) lie on the Cytoplasmic side of the membrane.

Belongs to the G-protein coupled receptor 1 family.

The protein localises to the cell membrane. Functionally, odorant receptor. This chain is Olfactory receptor 7D2 (OR7D2), found in Homo sapiens (Human).